We begin with the raw amino-acid sequence, 571 residues long: Proline--tRNA ligase (571 aa).

The protein belongs to the class-II aminoacyl-tRNA synthetase family. ProS type 1 subfamily. Homodimer.

It is found in the cytoplasm. The catalysed reaction is tRNA(Pro) + L-proline + ATP = L-prolyl-tRNA(Pro) + AMP + diphosphate. Catalyzes the attachment of proline to tRNA(Pro) in a two-step reaction: proline is first activated by ATP to form Pro-AMP and then transferred to the acceptor end of tRNA(Pro). As ProRS can inadvertently accommodate and process non-cognate amino acids such as alanine and cysteine, to avoid such errors it has two additional distinct editing activities against alanine. One activity is designated as 'pretransfer' editing and involves the tRNA(Pro)-independent hydrolysis of activated Ala-AMP. The other activity is designated 'posttransfer' editing and involves deacylation of mischarged Ala-tRNA(Pro). The misacylated Cys-tRNA(Pro) is not edited by ProRS. This chain is Proline--tRNA ligase, found in Vibrio vulnificus (strain YJ016).